A 364-amino-acid chain; its full sequence is DNA polymerase IV (364 aa).

One can recognise a UmuC domain in the interval 14–198 (IIHIDMDAFF…LPIEKFHGVG (185 aa)). Residues aspartate 18 and aspartate 116 each contribute to the Mg(2+) site. Residue glutamate 117 is part of the active site.

It belongs to the DNA polymerase type-Y family. In terms of assembly, monomer. Mg(2+) is required as a cofactor.

Its subcellular location is the cytoplasm. The catalysed reaction is DNA(n) + a 2'-deoxyribonucleoside 5'-triphosphate = DNA(n+1) + diphosphate. In terms of biological role, poorly processive, error-prone DNA polymerase involved in untargeted mutagenesis. Copies undamaged DNA at stalled replication forks, which arise in vivo from mismatched or misaligned primer ends. These misaligned primers can be extended by PolIV. Exhibits no 3'-5' exonuclease (proofreading) activity. May be involved in translesional synthesis, in conjunction with the beta clamp from PolIII. The sequence is that of DNA polymerase IV from Streptococcus pyogenes serotype M2 (strain MGAS10270).